The chain runs to 115 residues: Phosphoribosyl-AMP cyclohydrolase (115 aa).

A Mg(2+)-binding site is contributed by Asp80. Cys81 serves as a coordination point for Zn(2+). Positions 82 and 84 each coordinate Mg(2+). Zn(2+)-binding residues include Cys97 and Cys104.

This sequence belongs to the PRA-CH family. In terms of assembly, homodimer. Mg(2+) is required as a cofactor. Zn(2+) serves as cofactor.

It localises to the cytoplasm. The catalysed reaction is 1-(5-phospho-beta-D-ribosyl)-5'-AMP + H2O = 1-(5-phospho-beta-D-ribosyl)-5-[(5-phospho-beta-D-ribosylamino)methylideneamino]imidazole-4-carboxamide. The protein operates within amino-acid biosynthesis; L-histidine biosynthesis; L-histidine from 5-phospho-alpha-D-ribose 1-diphosphate: step 3/9. Functionally, catalyzes the hydrolysis of the adenine ring of phosphoribosyl-AMP. The chain is Phosphoribosyl-AMP cyclohydrolase from Mycobacterium sp. (strain MCS).